We begin with the raw amino-acid sequence, 665 residues long: Golgi-associated RAB2B interactor protein 3 (665 aa).

Disordered regions lie at residues 211–240, 272–296, and 480–590; these read EIRG…AGGE, AAAG…GTAG, and SEGY…GSVS. Residues 219–232 show a composition bias toward polar residues; it reads NSRPQSSPTVSEAT. The span at 499 to 513 shows a compositional bias: basic and acidic residues; sequence EAKEKRERREKDRTS. Basic residues-rich tracts occupy residues 514–538 and 554–566; these read SRKS…RKTS and GHGR…HSSS. A Bipartite nuclear localization signal motif is present at residues 515–531; that stretch reads RKSSHHRRTGMSRHSSK. At Ser652 the chain carries Phosphoserine.

It belongs to the GARIN family. As to quaternary structure, interacts (via N-terminus) with RAB2B (in GTP-bound form). Interacts with FRG1. As to expression, expressed in adult spermatocytes and spermatids.

It is found in the golgi apparatus. It localises to the nucleus. Its subcellular location is the cajal body. In terms of biological role, may be involved in RNA biogenesis. This is Golgi-associated RAB2B interactor protein 3 from Mus musculus (Mouse).